Consider the following 458-residue polypeptide: Homogentisate 1,2-dioxygenase (458 aa).

Residue His308 is the Proton acceptor of the active site. Positions 351 and 357 each coordinate Fe cation. Residues Tyr366 and His387 each contribute to the homogentisate site. Position 387 (His387) interacts with Fe cation.

The protein belongs to the homogentisate dioxygenase family. As to quaternary structure, hexamer; dimer of trimers. The cofactor is Fe cation.

It carries out the reaction homogentisate + O2 = 4-maleylacetoacetate + H(+). The protein operates within amino-acid degradation; L-phenylalanine degradation; acetoacetate and fumarate from L-phenylalanine: step 4/6. Its function is as follows. Involved in the catabolism of homogentisate (2,5-dihydroxyphenylacetate or 2,5-OH-PhAc), a central intermediate in the degradation of phenylalanine and tyrosine. Catalyzes the oxidative ring cleavage of the aromatic ring of homogentisate to yield maleylacetoacetate. The protein is Homogentisate 1,2-dioxygenase of Xanthomonas axonopodis pv. citri (strain 306).